The chain runs to 46 residues: Ligatoxin-B (46 aa).

Disulfide bonds link Cys3–Cys40, Cys4–Cys32, and Cys16–Cys26.

It belongs to the plant thionin (TC 1.C.44) family.

It is found in the secreted. Functionally, thionins are small plant proteins which are toxic to animal cells. They seem to exert their toxic effect at the level of the cell membrane. Their precise function is not known. This is Ligatoxin-B from Phoradendron liga (Argentine mistletoe).